Here is a 550-residue protein sequence, read N- to C-terminus: Solute carrier family 22 member 11 (550 aa).

Residues 1 to 10 (MAFSKLLEQA) are Cytoplasmic-facing. A helical membrane pass occupies residues 11 to 31 (GGVGLFQTLQVLTFILPCLMI). Residues 32-142 (PSQMLLENFS…DLVCSSQGLK (111 aa)) lie on the Extracellular side of the membrane. 3 N-linked (GlcNAc...) asparagine glycosylation sites follow: Asn-39, Asn-56, and Asn-99. The chain crosses the membrane as a helical span at residues 143–163 (PLSQSIFMSGILVGSFIWGLL). Residues 164 to 174 (SYRFGRKPMLS) lie on the Cytoplasmic side of the membrane. Residues 175–195 (WCCLQLAVAGTSTIFAPTFVI) form a helical membrane-spanning segment. The Extracellular portion of the chain corresponds to 196-200 (YCGLR). Residues 201-221 (FVAAFGMAGIFLSSLTLMVEW) traverse the membrane as a helical segment. Residues 222–231 (TTTSRRAVTM) lie on the Cytoplasmic side of the membrane. The helical transmembrane segment at 232 to 252 (TVVGCAFSAGQAALGGLAFAL) threads the bilayer. At 253–256 (RDWR) the chain is on the extracellular side. A helical transmembrane segment spans residues 257–277 (TLQLAASVPFFAISLISWWLP). Residues 278 to 346 (ESARWLIIKG…FCVPVLRWRS (69 aa)) lie on the Cytoplasmic side of the membrane. The helical transmembrane segment at 347–367 (CAMLVVNFSLLISYYGLVFDL) threads the bilayer. Topologically, residues 368–378 (QSLGRDIFLLQ) are extracellular. A helical transmembrane segment spans residues 379–399 (ALFGAVDFLGRATTALLLSFL). Over 400–402 (GRR) the chain is Cytoplasmic. Residues 403–423 (TIQAGSQAMAGLAILANMLVP) traverse the membrane as a helical segment. At 424–430 (QDLQTLR) the chain is on the extracellular side. The chain crosses the membrane as a helical span at residues 431–451 (VVFAVLGKGCFGISLTCLTIY). Topologically, residues 452 to 463 (KAELFPTPVRMT) are cytoplasmic. The chain crosses the membrane as a helical span at residues 464–484 (ADGILHTVGRLGAMMGPLILM). Residues 485 to 490 (SRQALP) lie on the Extracellular side of the membrane. Residues 491–511 (LLPPLLYGVISIASSLVVLFF) traverse the membrane as a helical segment. The Cytoplasmic segment spans residues 512–550 (LPETQGLPLPDTIQDLESQKSTAAQGNRQEAVTVESTSL). The disordered stretch occupies residues 531–550 (KSTAAQGNRQEAVTVESTSL).

Belongs to the major facilitator (TC 2.A.1) superfamily. Organic cation transporter (TC 2.A.1.19) family. N-glycosylated. Contains several complex-type N-glycans. In terms of tissue distribution, expressed in placental trophoblasts, syncytiotrophoblast and cytotrophoblast. Also located in the proximal tubules in kidneys.

Its subcellular location is the cell membrane. It localises to the apical cell membrane. The protein localises to the basal cell membrane. The catalysed reaction is estrone 3-sulfate(out) + glutarate(in) = estrone 3-sulfate(in) + glutarate(out). It catalyses the reaction dehydroepiandrosterone 3-sulfate(out) = dehydroepiandrosterone 3-sulfate(in). It carries out the reaction prostaglandin F2alpha(out) = prostaglandin F2alpha(in). The enzyme catalyses prostaglandin E2(out) = prostaglandin E2(in). Functionally, antiporter that mediates the transport of conjugated steroids and other specific organic anions at the basal membrane of syncytiotrophoblast and at the apical membrane of proximal tubule epithelial cells, in exchange for anionic compounds. May be responsible for placental absorption of fetal-derived steroid sulfates such as estrone sulfate (E1S) and the steroid hormone precursor dehydroepiandrosterone sulfate (DHEA-S), as well as clearing waste products and xenobiotics from the fetus. Maybe also be involved in placental urate homeostasis. Facilitates the renal reabsorption of organic anions such as urate and derived steroid sulfates. Organic anion glutarate acts as conteranion for E1S renal uptake. Possible transport mode may also include DHEA-S/E1S exchange. Also interacts with inorganic anions such as chloride and hydroxyl ions, therefore possible transport modes may include E1S/Cl(-), E1S/OH(-), urate/Cl(-) and urate/OH(-). Also mediates the transport of prostaglandin E2 (PGE2) and prostaglandin F2-alpha (PGF2-alpha) and may be involved in their renal excretion. Also able to uptake anionic drugs, diuretics, bile salts and ochratoxin A. Mediates the unidirectional efflux of glutamate and aspartate. Glutamate efflux down its transmembrane gradient may drive SLC22A11/OAT4-mediated placental uptake of E1S. The chain is Solute carrier family 22 member 11 from Homo sapiens (Human).